A 162-amino-acid polypeptide reads, in one-letter code: Transcription elongation factor GreA (162 aa).

The stretch at 44 to 69 forms a coiled coil; that stretch reads SENAEYEAAREKQAFVEARIKHLEDI.

It belongs to the GreA/GreB family.

Functionally, necessary for efficient RNA polymerase transcription elongation past template-encoded arresting sites. The arresting sites in DNA have the property of trapping a certain fraction of elongating RNA polymerases that pass through, resulting in locked ternary complexes. Cleavage of the nascent transcript by cleavage factors such as GreA or GreB allows the resumption of elongation from the new 3'terminus. GreA releases sequences of 2 to 3 nucleotides. This is Transcription elongation factor GreA from Rickettsia bellii (strain RML369-C).